We begin with the raw amino-acid sequence, 583 residues long: Probable phosphoglucomutase, cytoplasmic 1 (583 aa).

The alpha-D-glucose 1,6-bisphosphate site is built by Arg-24 and Ser-123. The active-site Phosphoserine intermediate is the Ser-123. Mg(2+) contacts are provided by Ser-123, Asp-299, Asp-301, and Asp-303. Residue Ser-123 is modified to Phosphoserine. Alpha-D-glucose 1,6-bisphosphate-binding residues include Asp-303, Arg-304, Thr-367, Glu-386, Ser-388, and Lys-399.

The protein belongs to the phosphohexose mutase family. As to quaternary structure, monomer. Mg(2+) serves as cofactor.

Its subcellular location is the cytoplasm. The enzyme catalyses alpha-D-glucose 1-phosphate = alpha-D-glucose 6-phosphate. The catalysed reaction is O-phospho-L-seryl-[protein] + alpha-D-glucose 1-phosphate = alpha-D-glucose 1,6-bisphosphate + L-seryl-[protein]. It catalyses the reaction alpha-D-glucose 1,6-bisphosphate + L-seryl-[protein] = O-phospho-L-seryl-[protein] + alpha-D-glucose 6-phosphate. In terms of biological role, catalyzes the reversible isomerization of alpha-D-glucose 1-phosphate to alpha-D-glucose 6-phosphate. The mechanism proceeds via the intermediate compound alpha-D-glucose 1,6-bisphosphate. This enzyme participates in both the breakdown and synthesis of glucose. The chain is Probable phosphoglucomutase, cytoplasmic 1 from Arabidopsis thaliana (Mouse-ear cress).